The sequence spans 1681 residues: Probable clathrin heavy chain 1 (1681 aa).

WD40-like repeat regions lie at residues 22–65 (NITF…RPIS), 66–105 (ADSV…NVED), 106–147 (VVYW…QSLA), 148–193 (GTQI…QPIE), 194–255 (GHAA…ADTA), 256–299 (GDFP…ISTD), and 300–328 (TVFV…VSID). CHCR repeat units follow at residues 539 to 685 (SENG…QVVV), 688 to 830 (ASKY…SEDA), 835 to 974 (IINT…QLID), 981 to 1126 (LSET…VKEA), 1130 to 1271 (FIKA…FRLA), 1276 to 1422 (LHIV…LLLN), and 1425 to 1568 (LTVL…YDCF). The segment covering 1616-1628 (ERSEHERKEEKAE) has biased composition (basic and acidic residues). Residues 1616–1635 (ERSEHERKEEKAEQQQNNGM) form a disordered region.

This sequence belongs to the clathrin heavy chain family. In terms of assembly, clathrin triskelions, composed of 3 heavy chains and 3 light chains, are the basic subunits of the clathrin coat. May interact with beta arrestin arr-1.

The protein resides in the cytoplasmic vesicle membrane. Its subcellular location is the membrane. It is found in the coated pit. Its function is as follows. Clathrin is the major protein of the polyhedral coat of coated pits and vesicles. May play a role in yolk protein clatherin-mediated endocytosis by oocytes during oogenesis. The protein is Probable clathrin heavy chain 1 (chc-1) of Caenorhabditis elegans.